Here is a 372-residue protein sequence, read N- to C-terminus: MSAFVNIDAQRIPVALSHQPYEVVIGGEGLRGVGKELRRAGLKEGIKVLVVSNADVAEPYGDLCLQSLSDSGYRPTLLVIEAGEDQKTPVSVALIHDAAYEAKLERGSLMVALGGGVVGDMTGFAAATWLRGISVVQLPTTLLAMVDAAIGGKTGVNHPGGKNLIGAFHQPRLVLIDPSTLNTLPEREFRAGMAEVIKYGVIGDAALFQLLEGIPELNTPSQLHADLLEKILERSALAKSRVVSSDEREGGLRAILNYGHTFGHVVETLCGYGTWLHGEAVAIGMVAVGELAVLRQSWNRDDANRQKSLIAKAGLPIAWPKLDPEEVLYTLQGDKKVKDGKLRFVIPTGIGNVEIKNDVSREEIRKCLSELS.

Residues 116–120 (GVVGD), 140–141 (TT), Lys153, Lys162, and 180–183 (TLNT) each bind NAD(+). Zn(2+)-binding residues include Glu195, His260, and His277.

Belongs to the sugar phosphate cyclases superfamily. Dehydroquinate synthase family. The cofactor is Co(2+). Zn(2+) is required as a cofactor. It depends on NAD(+) as a cofactor.

It localises to the cytoplasm. It carries out the reaction 7-phospho-2-dehydro-3-deoxy-D-arabino-heptonate = 3-dehydroquinate + phosphate. It participates in metabolic intermediate biosynthesis; chorismate biosynthesis; chorismate from D-erythrose 4-phosphate and phosphoenolpyruvate: step 2/7. Functionally, catalyzes the conversion of 3-deoxy-D-arabino-heptulosonate 7-phosphate (DAHP) to dehydroquinate (DHQ). The protein is 3-dehydroquinate synthase of Prochlorococcus marinus (strain MIT 9303).